Here is an 86-residue protein sequence, read N- to C-terminus: Mu-theraphotoxin-Hhn1b 3 (86 aa).

The signal sequence occupies residues 1-21 (MKASMFLALTGLALLFVVCYA). Residues 22 to 49 (SESEEKEFSNELLSSVLAVDDNSKGEER) constitute a propeptide that is removed on maturation. Cystine bridges form between cysteine 51/cysteine 66, cysteine 58/cysteine 73, and cysteine 65/cysteine 80. Isoleucine 84 bears the Isoleucine amide mark.

This sequence belongs to the neurotoxin 10 (Hwtx-1) family. 22 (Htx-4) subfamily. Monomer. Expressed by the venom gland.

It localises to the secreted. Its function is as follows. Neurotoxin. Selectively blocks neuronal tetrodotoxin-sensitive voltage-gated sodium channels (Nav) with an IC(50) of 44.6 nM. Does not affect tetrodotoxin-resistant voltage-gated sodium channels or calcium channels. The polypeptide is Mu-theraphotoxin-Hhn1b 3 (Cyriopagopus hainanus (Chinese bird spider)).